A 134-amino-acid chain; its full sequence is Thionin-2.2 (134 aa).

The first 24 residues, 1 to 24 (MEGKTVISSLLIMSLVLAQIQVEA), serve as a signal peptide directing secretion. 3 disulfide bridges follow: cysteine 27–cysteine 64, cysteine 28–cysteine 56, and cysteine 40–cysteine 50. Residues 71 to 134 (DILENSGDAV…GGSTAAVKSA (64 aa)) constitute a propeptide, acidic domain.

This sequence belongs to the plant thionin (TC 1.C.44) family. In terms of tissue distribution, low basal expression in seedlings. Also detected in rosette leaves.

It localises to the secreted. Functionally, thionins are small plant proteins which are toxic to animal cells. They seem to exert their toxic effect at the level of the cell membrane. Their precise function is not known. In Arabidopsis thaliana (Mouse-ear cress), this protein is Thionin-2.2 (THI2.2).